Reading from the N-terminus, the 126-residue chain is Aspartate 1-decarboxylase (126 aa).

The Schiff-base intermediate with substrate; via pyruvic acid role is filled by Ser25. Position 25 is a pyruvic acid (Ser) (Ser25). Thr57 serves as a coordination point for substrate. Catalysis depends on Tyr58, which acts as the Proton donor. 73 to 75 lines the substrate pocket; sequence GAA.

Belongs to the PanD family. Heterooctamer of four alpha and four beta subunits. Pyruvate is required as a cofactor. Is synthesized initially as an inactive proenzyme, which is activated by self-cleavage at a specific serine bond to produce a beta-subunit with a hydroxyl group at its C-terminus and an alpha-subunit with a pyruvoyl group at its N-terminus.

The protein localises to the cytoplasm. The enzyme catalyses L-aspartate + H(+) = beta-alanine + CO2. Its pathway is cofactor biosynthesis; (R)-pantothenate biosynthesis; beta-alanine from L-aspartate: step 1/1. In terms of biological role, catalyzes the pyruvoyl-dependent decarboxylation of aspartate to produce beta-alanine. The sequence is that of Aspartate 1-decarboxylase from Thioalkalivibrio sulfidiphilus (strain HL-EbGR7).